Consider the following 234-residue polypeptide: Probable transcriptional regulatory protein PSPTO_3162 (234 aa).

It belongs to the TACO1 family.

The protein localises to the cytoplasm. This is Probable transcriptional regulatory protein PSPTO_3162 from Pseudomonas syringae pv. tomato (strain ATCC BAA-871 / DC3000).